Consider the following 325-residue polypeptide: Endo-1,4-beta-xylanase 2 (325 aa).

Positions 1–18 are cleaved as a signal peptide; it reads MLYTSIFAAAMAASGAMA. The region spanning 26-325 is the GH10 domain; the sequence is ASNCTTLDSF…KAAVKAIMAI (300 aa). An N-linked (GlcNAc...) asparagine glycan is attached at N28. Catalysis depends on E157, which acts as the Proton donor. The Nucleophile role is filled by E262. C280 and C286 are oxidised to a cystine.

The protein belongs to the glycosyl hydrolase 10 (cellulase F) family.

It localises to the secreted. The catalysed reaction is Endohydrolysis of (1-&gt;4)-beta-D-xylosidic linkages in xylans.. Its pathway is glycan degradation; xylan degradation. Functionally, endo-1,4-beta-xylanase involved in the hydrolysis of xylan, a major structural heterogeneous polysaccharide found in plant biomass representing the second most abundant polysaccharide in the biosphere, after cellulose. This Claviceps purpurea (Ergot fungus) protein is Endo-1,4-beta-xylanase 2 (xyl2).